A 388-amino-acid chain; its full sequence is Succinate--CoA ligase [ADP-forming] subunit beta (388 aa).

The region spanning 9–246 (KDILRQFGVP…FEEEDPAEVL (238 aa)) is the ATP-grasp domain. ATP-binding positions include Lys-46, 53 to 55 (GRG), Glu-99, Ala-102, and Glu-107. Mg(2+) contacts are provided by Asn-201 and Asp-215. Substrate is bound by residues Asn-266 and 323-325 (GIM).

This sequence belongs to the succinate/malate CoA ligase beta subunit family. In terms of assembly, heterotetramer of two alpha and two beta subunits. Requires Mg(2+) as cofactor.

The catalysed reaction is succinate + ATP + CoA = succinyl-CoA + ADP + phosphate. It catalyses the reaction GTP + succinate + CoA = succinyl-CoA + GDP + phosphate. It functions in the pathway carbohydrate metabolism; tricarboxylic acid cycle; succinate from succinyl-CoA (ligase route): step 1/1. Functionally, succinyl-CoA synthetase functions in the citric acid cycle (TCA), coupling the hydrolysis of succinyl-CoA to the synthesis of either ATP or GTP and thus represents the only step of substrate-level phosphorylation in the TCA. The beta subunit provides nucleotide specificity of the enzyme and binds the substrate succinate, while the binding sites for coenzyme A and phosphate are found in the alpha subunit. The chain is Succinate--CoA ligase [ADP-forming] subunit beta from Verminephrobacter eiseniae (strain EF01-2).